The primary structure comprises 58 residues: NADH dehydrogenase [ubiquinone] 1 beta subcomplex subunit 1 (58 aa).

A helical transmembrane segment spans residues H11–L27.

Belongs to the complex I NDUFB1 subunit family. Complex I is composed of 45 different subunits.

It localises to the mitochondrion inner membrane. Its function is as follows. Accessory subunit of the mitochondrial membrane respiratory chain NADH dehydrogenase (Complex I) that is believed not to be involved in catalysis. Complex I functions in the transfer of electrons from NADH to the respiratory chain. The immediate electron acceptor for the enzyme is believed to be ubiquinone. This chain is NADH dehydrogenase [ubiquinone] 1 beta subcomplex subunit 1 (NDUFB1), found in Homo sapiens (Human).